We begin with the raw amino-acid sequence, 506 residues long: MTAPKPVVLCILDGWGLRAEREANAVALANTPTFDRLMATCPNATLITHGPDVGLPRGQMGNSEVGHTNIGAGRVVAMDLGAIDLAIEEGTFARNPALCDFIAKVKAKGGTAHLMGVVSDGGVHGHIQHLIAAVEVIAASGVPVVIHAITDGRDVAPTSAGGFVQQLAEALPAGASIGTVIGRYWAMDRDKRWDRVKRASDAMLHGQGERAADAVAAVAAALARGETDEFIAPTVIGSYTGAMDGDGFFCLNFRADRAREILAGLAQPGFDAYDTGRRPDWSGFLGMVDYSTEHDRFMTTAYPKQVIRNTLGEWVASHGLRQFRIAETEKYPHVTFFLNGGKEVPEAGEDRYMANSPKVATYDLKPEMSAPDVSDHLVQAIGEGYDLIVVNYANPDMVGHTGDLRAAMAACEEVDRGLGRAVEAVRQAGGAMIVTADHGNCETMIDPETGGPHTAHTTNPVPVILVGGPAGARLRAGRLADLAPTLLELMGLPQPEEMTGRSLIEA.

Residues D13 and S63 each coordinate Mn(2+). S63 (phosphoserine intermediate) is an active-site residue. Substrate is bound by residues H124, 153–154 (RD), R183, R189, 254–257 (RADR), and K330. Residues D396, H400, D437, H438, and H456 each coordinate Mn(2+).

It belongs to the BPG-independent phosphoglycerate mutase family. In terms of assembly, monomer. Mn(2+) serves as cofactor.

The catalysed reaction is (2R)-2-phosphoglycerate = (2R)-3-phosphoglycerate. Its pathway is carbohydrate degradation; glycolysis; pyruvate from D-glyceraldehyde 3-phosphate: step 3/5. Its function is as follows. Catalyzes the interconversion of 2-phosphoglycerate and 3-phosphoglycerate. The sequence is that of 2,3-bisphosphoglycerate-independent phosphoglycerate mutase from Cereibacter sphaeroides (strain ATCC 17025 / ATH 2.4.3) (Rhodobacter sphaeroides).